Reading from the N-terminus, the 267-residue chain is uncharacterized protein (267 aa).

The ABC transporter domain occupies Leu2–Gly198. Gly3–Thr10 is an ATP binding site.

Belongs to the ABC transporter superfamily.

This is an uncharacterized protein from Alkalihalophilus pseudofirmus (strain ATCC BAA-2126 / JCM 17055 / OF4) (Bacillus pseudofirmus).